Consider the following 189-residue polypeptide: MDRLKKSLLEAPIIEKEGYHYFVHPISDGVPMLRPELLREIVIKIIRKAELDDVDKIVTPAAMGIHISTAVSLMTDIPLVVVRKRQYGLDGEVSLSQVTGYSESEMYVNDVYEGDQVLVLDDVLSTGGTLAGLTGALEDIGADIRDIVCVIKKADGTNKLDEAGYDAKTLINVQVIDGEVTIVDEHGDD.

Belongs to the purine/pyrimidine phosphoribosyltransferase family. Archaeal HPRT subfamily.

Its function is as follows. May catalyze a purine salvage reaction, the substrate is unknown. In Haloarcula marismortui (strain ATCC 43049 / DSM 3752 / JCM 8966 / VKM B-1809) (Halobacterium marismortui), this protein is HGPRTase-like protein 2.